A 42-amino-acid polypeptide reads, in one-letter code: Photosystem I reaction center subunit IX (42 aa).

Residues 7–27 traverse the membrane as a helical segment; that stretch reads YLSTAPVLAAIWFAILAGLLI.

Belongs to the PsaJ family.

It is found in the plastid. The protein localises to the chloroplast thylakoid membrane. May help in the organization of the PsaE and PsaF subunits. The protein is Photosystem I reaction center subunit IX of Zygnema circumcarinatum (Green alga).